The primary structure comprises 240 residues: DNA repair protein RecO (240 aa).

The protein belongs to the RecO family.

Its function is as follows. Involved in DNA repair and RecF pathway recombination. This chain is DNA repair protein RecO, found in Wolbachia sp. subsp. Drosophila simulans (strain wRi).